The sequence spans 1087 residues: Exportin-7-B (1087 aa).

The region spanning 30–96 (AEKALVEFTN…RNYVLTYLAT (67 aa)) is the Importin N-terminal domain.

It belongs to the exportin family.

It is found in the cytoplasm. The protein localises to the nucleus. Functionally, mediates the nuclear export of proteins (cargos) with broad substrate specificity. This is Exportin-7-B (xpo7-b) from Xenopus laevis (African clawed frog).